The chain runs to 251 residues: tRNA (guanine-N(7)-)-methyltransferase (251 aa).

A disordered region spans residues 1 to 43 (MQPNEQPGTGPADTTLEQQDTAAAEVGHPRRIRSFVRRAGRTS). Residues 29 to 40 (PRRIRSFVRRAG) show a composition bias toward basic residues. Residues glutamate 82, glutamate 107, aspartate 134, and aspartate 157 each coordinate S-adenosyl-L-methionine. The active site involves aspartate 157. A substrate-binding site is contributed by lysine 161. The interval 163 to 168 (RHNKRR) is interaction with RNA. Substrate contacts are provided by residues aspartate 193 and 228 to 231 (TKFE).

This sequence belongs to the class I-like SAM-binding methyltransferase superfamily. TrmB family.

The catalysed reaction is guanosine(46) in tRNA + S-adenosyl-L-methionine = N(7)-methylguanosine(46) in tRNA + S-adenosyl-L-homocysteine. It functions in the pathway tRNA modification; N(7)-methylguanine-tRNA biosynthesis. In terms of biological role, catalyzes the formation of N(7)-methylguanine at position 46 (m7G46) in tRNA. The protein is tRNA (guanine-N(7)-)-methyltransferase of Ralstonia nicotianae (strain ATCC BAA-1114 / GMI1000) (Ralstonia solanacearum).